A 207-amino-acid chain; its full sequence is MLSTFVQGFFLSAAMILPLGPQNAFVMQQGSRRQFHLMSATLCAISDGFLIGVGVFGGSALLSQSTLLLQFVTWGGVAFLFWYGWGALRVVLFANVELAQVNNSVKNRWRVVAIIFAVTWLNPHVYLDTIVVLGSIGGQLSSDLRPWFTFGAASASVSWFFSLSLLAAWFSPVLSKPLSQRIINGFICIIMWYIAWQLAKQGLLISD.

6 consecutive transmembrane segments (helical) span residues 1 to 21, 42 to 62, 67 to 87, 111 to 131, 150 to 170, and 185 to 205; these read MLSTFVQGFFLSAAMILPLGP, LCAISDGFLIGVGVFGGSALL, LLLQFVTWGGVAFLFWYGWGA, VVAIIFAVTWLNPHVYLDTIV, FGAASASVSWFFSLSLLAAWF, and GFICIIMWYIAWQLAKQGLLI.

Belongs to the LysE/ArgO transporter (TC 2.A.75) family.

The protein localises to the cell inner membrane. The enzyme catalyses L-arginine(in) = L-arginine(out). Functionally, involved in the export of arginine. Important to control the intracellular level of arginine and the correct balance between arginine and lysine. In Photorhabdus laumondii subsp. laumondii (strain DSM 15139 / CIP 105565 / TT01) (Photorhabdus luminescens subsp. laumondii), this protein is Arginine exporter protein ArgO.